The sequence spans 141 residues: Large ribosomal subunit protein uL11 (141 aa).

This sequence belongs to the universal ribosomal protein uL11 family. As to quaternary structure, part of the ribosomal stalk of the 50S ribosomal subunit. Interacts with L10 and the large rRNA to form the base of the stalk. L10 forms an elongated spine to which L12 dimers bind in a sequential fashion forming a multimeric L10(L12)X complex. In terms of processing, one or more lysine residues are methylated.

Forms part of the ribosomal stalk which helps the ribosome interact with GTP-bound translation factors. This Cyanothece sp. (strain PCC 7425 / ATCC 29141) protein is Large ribosomal subunit protein uL11.